Here is a 728-residue protein sequence, read N- to C-terminus: 1,4-alpha-glucan branching enzyme GlgB (728 aa).

The Nucleophile role is filled by Asp-405. The Proton donor role is filled by Glu-458.

It belongs to the glycosyl hydrolase 13 family. GlgB subfamily. In terms of assembly, monomer.

The catalysed reaction is Transfers a segment of a (1-&gt;4)-alpha-D-glucan chain to a primary hydroxy group in a similar glucan chain.. It participates in glycan biosynthesis; glycogen biosynthesis. Catalyzes the formation of the alpha-1,6-glucosidic linkages in glycogen by scission of a 1,4-alpha-linked oligosaccharide from growing alpha-1,4-glucan chains and the subsequent attachment of the oligosaccharide to the alpha-1,6 position. This is 1,4-alpha-glucan branching enzyme GlgB from Escherichia coli O6:K15:H31 (strain 536 / UPEC).